Consider the following 142-residue polypeptide: Large ribosomal subunit protein uL13 (142 aa).

Belongs to the universal ribosomal protein uL13 family. Part of the 50S ribosomal subunit.

This protein is one of the early assembly proteins of the 50S ribosomal subunit, although it is not seen to bind rRNA by itself. It is important during the early stages of 50S assembly. The polypeptide is Large ribosomal subunit protein uL13 (Vibrio vulnificus (strain CMCP6)).